Here is a 542-residue protein sequence, read N- to C-terminus: Bifunctional pantoate ligase/cytidylate kinase (542 aa).

The interval 1 to 280 (MHWLRTVAAL…VGQTRLIDNL (280 aa)) is pantoate--beta-alanine ligase. 28 to 35 (MGSLHEGH) is an ATP binding site. The Proton donor role is filled by His35. Gln59 is a binding site for (R)-pantoate. A beta-alanine-binding site is contributed by Gln59. An ATP-binding site is contributed by 150–153 (GQKD). A (R)-pantoate-binding site is contributed by Gln156. Residues Val179 and 187-190 (CSSR) each bind ATP. Residues 281-542 (LLSPEQGDPL…ERSGPARLDQ (262 aa)) form a cytidylate kinase region. The interval 287–311 (GDPLPERVQHAAPPSSGTTSPPRRP) is disordered.

It in the N-terminal section; belongs to the pantothenate synthetase family. The protein in the C-terminal section; belongs to the cytidylate kinase family. Type 1 subfamily.

The protein resides in the cytoplasm. It catalyses the reaction (R)-pantoate + beta-alanine + ATP = (R)-pantothenate + AMP + diphosphate + H(+). The catalysed reaction is CMP + ATP = CDP + ADP. The enzyme catalyses dCMP + ATP = dCDP + ADP. It functions in the pathway cofactor biosynthesis; (R)-pantothenate biosynthesis; (R)-pantothenate from (R)-pantoate and beta-alanine: step 1/1. Its function is as follows. Catalyzes the condensation of pantoate with beta-alanine in an ATP-dependent reaction via a pantoyl-adenylate intermediate. In terms of biological role, catalyzes the transfer of a phosphate group from ATP to either CMP or dCMP to form CDP or dCDP and ADP, respectively. The sequence is that of Bifunctional pantoate ligase/cytidylate kinase from Synechococcus sp. (strain JA-2-3B'a(2-13)) (Cyanobacteria bacterium Yellowstone B-Prime).